A 155-amino-acid polypeptide reads, in one-letter code: Small ribosomal subunit protein uS7cz/uS7cy (155 aa).

Belongs to the universal ribosomal protein uS7 family. As to quaternary structure, part of the 30S ribosomal subunit.

Its subcellular location is the plastid. It localises to the chloroplast. In terms of biological role, one of the primary rRNA binding proteins, it binds directly to 16S rRNA where it nucleates assembly of the head domain of the 30S subunit. The protein is Small ribosomal subunit protein uS7cz/uS7cy (rps7-A) of Lactuca sativa (Garden lettuce).